The sequence spans 564 residues: O-fucosyltransferase 5 (564 aa).

The segment at 1–28 is disordered; sequence MVRNSSDEEEDHRNLIPQNDTRDNDLNL. A helical; Signal-anchor for type II membrane protein membrane pass occupies residues 70–90; the sequence is YVVAAVSLTLFVGLLFLFTDT. N-linked (GlcNAc...) asparagine glycans are attached at residues Asn129, Asn134, and Asn174. Substrate-binding positions include 413 to 415 and 529 to 530; these read HLR and TF.

This sequence belongs to the glycosyltransferase GT106 family.

It is found in the membrane. It participates in glycan metabolism. This chain is O-fucosyltransferase 5, found in Arabidopsis thaliana (Mouse-ear cress).